Here is a 368-residue protein sequence, read N- to C-terminus: GTPase Obg (368 aa).

Positions Met1 to Leu159 constitute an Obg domain. The OBG-type G domain maps to Ala160 to Asp328. GTP-binding positions include Gly166–Ser173, Phe191–Val195, Asp213–Gly216, Asn280–Asp283, and Ser309–Ala311. Mg(2+) contacts are provided by Ser173 and Thr193.

Belongs to the TRAFAC class OBG-HflX-like GTPase superfamily. OBG GTPase family. In terms of assembly, monomer. Mg(2+) is required as a cofactor.

It localises to the cytoplasm. Its function is as follows. An essential GTPase which binds GTP, GDP and possibly (p)ppGpp with moderate affinity, with high nucleotide exchange rates and a fairly low GTP hydrolysis rate. Plays a role in control of the cell cycle, stress response, ribosome biogenesis and in those bacteria that undergo differentiation, in morphogenesis control. This is GTPase Obg from Synechocystis sp. (strain ATCC 27184 / PCC 6803 / Kazusa).